The chain runs to 369 residues: S-(hydroxymethyl)glutathione dehydrogenase (369 aa).

Zn(2+) is bound by residues C40, H62, C92, C95, C98, C106, and C169.

It belongs to the zinc-containing alcohol dehydrogenase family. Class-III subfamily. In terms of assembly, homodimer. The cofactor is Zn(2+).

Its subcellular location is the cytoplasm. The catalysed reaction is S-(hydroxymethyl)glutathione + NADP(+) = S-formylglutathione + NADPH + H(+). It catalyses the reaction S-(hydroxymethyl)glutathione + NAD(+) = S-formylglutathione + NADH + H(+). It carries out the reaction a primary alcohol + NAD(+) = an aldehyde + NADH + H(+). The enzyme catalyses a secondary alcohol + NAD(+) = a ketone + NADH + H(+). The catalysed reaction is S-nitrosoglutathione + NADH + H(+) = S-(hydroxysulfenamide)glutathione + NAD(+). Has high formaldehyde dehydrogenase activity in the presence of glutathione and catalyzes the oxidation of normal alcohols in a reaction that is not GSH-dependent. In addition, hemithiolacetals other than those formed from GSH, including omega-thiol fatty acids, also are substrates. Also acts as a S-nitroso-glutathione reductase by catalyzing the NADH-dependent reduction of S-nitrosoglutathione. The sequence is that of S-(hydroxymethyl)glutathione dehydrogenase (frmA) from Photobacterium damsela subsp. piscicida (Pasteurella piscicida).